The chain runs to 514 residues: Voltage-gated potassium channel regulatory subunit KCNG1 (514 aa).

The Cytoplasmic segment spans residues 1-224 (MTLLPGDNSH…DMVERPHSGL (224 aa)). The span at 180 to 196 (MEREEEEEPLDSEDQES) shows a compositional bias: acidic residues. The segment at 180–205 (MEREEEEEPLDSEDQESEGPSASEGR) is disordered. A helical membrane pass occupies residues 225 to 246 (PGKVFACLSVLFVTVTAVNLSV). Residues 247–267 (STLPSLREEEEQGQCSQMCHN) are Extracellular-facing. The helical transmembrane segment at 268 to 289 (VFIVESVCVGWFSLEFLLRFIQ) threads the bilayer. At 290–300 (APSKFAFLRSP) the chain is on the cytoplasmic side. Residues 301–321 (LTLIDLVAILPYYVTLLVDGA) traverse the membrane as a helical segment. Residues 322 to 338 (ASSRRKPSTGNSYLDKV) lie on the Extracellular side of the membrane. A helical; Voltage-sensor transmembrane segment spans residues 339-359 (GLVLRVLRALRILYVMRLARH). The Cytoplasmic portion of the chain corresponds to 360-374 (SLGLQTLGLTARRCT). The helical transmembrane segment at 375-396 (REFGLLLLFLCVAIALFAPLLY) threads the bilayer. Residues 397-411 (VIENEMADSPEFTSI) are Extracellular-facing. An intramembrane region (helical) is located at residues 412–423 (PACYWWAVITMT). The Selectivity filter motif lies at 424–429 (TVGYGD). The stretch at 424-431 (TVGYGDMV) is an intramembrane region. At 432 to 438 (PRSTPGQ) the chain is on the extracellular side. A helical transmembrane segment spans residues 439–467 (VVALSSILSGILLMAFPVTSIFHTFSRSY). Topologically, residues 468-514 (LELKQEQERVLIRRAQYLIKTKSQLSGMSQDSDILFGSASSDTRDNN) are cytoplasmic.

It belongs to the potassium channel family. G (TC 1.A.1.2) subfamily. Kv6.1/KCNG1 sub-subfamily. Heterotetramer with KCNB1 or KCNB2.

Its subcellular location is the cell membrane. In terms of biological role, regulatory alpha-subunit of the voltage-gated potassium (Kv) channel which, when coassembled with KCNB1 or KCNB2, can modulate their expression and their gating kinetics by acting on deactivation upon repolarization and inactivation during maintained depolarization. Potassium channel subunit that does not form functional channels by itself. This is Voltage-gated potassium channel regulatory subunit KCNG1 from Mus musculus (Mouse).